Consider the following 910-residue polypeptide: DNA mismatch repair protein MutS (910 aa).

Residues 1-11 (MEAKVEEKEPE) are compositionally biased toward basic and acidic residues. The tract at residues 1–21 (MEAKVEEKEPEPVENAGPDAP) is disordered. Residue 658 to 665 (GPNMGGKS) coordinates ATP.

It belongs to the DNA mismatch repair MutS family.

In terms of biological role, this protein is involved in the repair of mismatches in DNA. It is possible that it carries out the mismatch recognition step. This protein has a weak ATPase activity. The polypeptide is DNA mismatch repair protein MutS (Brucella abortus (strain 2308)).